Consider the following 134-residue polypeptide: MSWQAYVDDHLMCDIEGHEDHRLTAAAIVGHDGSVWAQSATFPQFKPEEMNGIMTDFNEPGHLAPTGLHLGGTKYMVIQGEAGAVIRGKKGSGGITIKKTGQALVFGIYEEPVTPGQCNMVVERLGDYLLEQGM.

The cysteines at positions 13 and 118 are disulfide-linked. Positions 84–100 (AVIRGKKGSGGITIKKT) match the Involved in PIP2 interaction motif. At T114 the chain carries Phosphothreonine.

It belongs to the profilin family. Occurs in many kinds of cells as a complex with monomeric actin in a 1:1 ratio. Post-translationally, phosphorylated by MAP kinases.

The protein resides in the cytoplasm. It is found in the cytoskeleton. Its function is as follows. Binds to actin and affects the structure of the cytoskeleton. At high concentrations, profilin prevents the polymerization of actin, whereas it enhances it at low concentrations. The chain is Profilin-1 from Olea europaea (Common olive).